A 437-amino-acid polypeptide reads, in one-letter code: Sodium/bile acid cotransporter 4 (437 aa).

Residues 1–103 (MDGNDNVTLL…LPFWDTPLNH (103 aa)) are Extracellular-facing. N-linked (GlcNAc...) asparagine glycosylation is found at Asn-6, Asn-18, and Asn-24. Residues 37-82 (APASSAGPGPGLSLGPGPSFGFSPGPTPTPEPTTSGLAGGAASHGP) are disordered. Over residues 51–60 (GPGPSFGFSP) the composition is skewed to low complexity. The helical transmembrane segment at 104–124 (GLNVFVGAALCITMLGLGCTV) threads the bilayer. The Cytoplasmic segment spans residues 125–140 (DVNHFGAHVRRPVGAL). A helical membrane pass occupies residues 141–161 (LAALCQFGLLPLLAFLLALAF). Residues 162 to 197 (KLDEVAAVAVLLCGCCPGGNLSNLMSLLVDGDMNLS) are Extracellular-facing. N-linked (GlcNAc...) asparagine glycans are attached at residues Asn-181 and Asn-195. Residues 198–218 (IIMTISSTLLALVLMPLCLWI) form a helical membrane-spanning segment. Over 219–233 (YSWAWINTPIVQLLP) the chain is Cytoplasmic. The chain crosses the membrane as a helical span at residues 234–254 (LGTVTLTLCSTLIPIGLGVFI). The Extracellular portion of the chain corresponds to 255 to 267 (RYKYSRVADYIVK). The helical transmembrane segment at 268–288 (VSLWSLLVTLVVLFIMTGTML) threads the bilayer. Residues 289 to 291 (GPE) are Cytoplasmic-facing. The chain crosses the membrane as a helical span at residues 292 to 312 (LLASIPAAVYVIAIFMPLAGY). Residues 313-360 (ASGYGLATLFHLPPNCKRTVCLETGSQNVQLCTAILKLAFPPQFIGSM) lie on the Extracellular side of the membrane. Residues 361-381 (YMFPLLYALFQSAEAGIFVLI) traverse the membrane as a helical segment. Over 382–437 (YKMYGSEMLHKRDPLDEDEDTDISYKKLKEEEMADTSYGTVKAENIIMMETAQTSL) the chain is Cytoplasmic.

The protein belongs to the bile acid:sodium symporter (BASS) (TC 2.A.28) family. In terms of processing, activated following N-terminal proteolytic cleavage by thrombin and/or proteases. As to expression, highly expressed in brain and small intestine, and moderately expressed in colon, heart, prostate, and testis. Very low levels were detected in kidney, liver, ovary, placenta, spleen, and thymus.

It is found in the cell membrane. Functionally, transporter for bile acids. The polypeptide is Sodium/bile acid cotransporter 4 (SLC10A4) (Homo sapiens (Human)).